The primary structure comprises 243 residues: Small ribosomal subunit protein uS3 (243 aa).

The region spanning 39–110 (IRTFIEKKYG…QVRINVVEVE (72 aa)) is the KH type-2 domain. Residues 216 to 243 (QTIPVGANPKRKASRRPQQFEDRSNENS) are disordered. Basic and acidic residues predominate over residues 233-243 (QQFEDRSNENS).

It belongs to the universal ribosomal protein uS3 family. Part of the 30S ribosomal subunit. Forms a tight complex with proteins S10 and S14.

Its function is as follows. Binds the lower part of the 30S subunit head. Binds mRNA in the 70S ribosome, positioning it for translation. The protein is Small ribosomal subunit protein uS3 of Prochlorococcus marinus (strain MIT 9215).